The following is a 188-amino-acid chain: MATYTTSDFKPGLKFMQDGEPCVIVENEFVKPGKGQAFTRTRIRKLISGKVLDVNFKSGTSVEAADVMDLNLTYSYKDDAFWYFMHPETFEQYSADAKAVGDAEKWLLDQADCVVTLWNGAPITVTPPNFVELEIVDTDPGLKGDTAGTGGKPATLSTGAVVKVPLFVQIGEVIRVDTRSGEYVSRVK.

An N6-(3,6-diaminohexanoyl)-5-hydroxylysine modification is found at lysine 34.

This sequence belongs to the elongation factor P family. May be beta-lysylated on the epsilon-amino group of Lys-34 by the combined action of EpmA and EpmB, and then hydroxylated on the C5 position of the same residue by EpmC (if this protein is present). Lysylation is critical for the stimulatory effect of EF-P on peptide-bond formation. The lysylation moiety may extend toward the peptidyltransferase center and stabilize the terminal 3-CCA end of the tRNA. Hydroxylation of the C5 position on Lys-34 may allow additional potential stabilizing hydrogen-bond interactions with the P-tRNA.

The protein localises to the cytoplasm. It functions in the pathway protein biosynthesis; polypeptide chain elongation. Its function is as follows. Involved in peptide bond synthesis. Alleviates ribosome stalling that occurs when 3 or more consecutive Pro residues or the sequence PPG is present in a protein, possibly by augmenting the peptidyl transferase activity of the ribosome. Modification of Lys-34 is required for alleviation. The chain is Elongation factor P from Haemophilus influenzae (strain PittGG).